The following is a 41-amino-acid chain: Large ribosomal subunit protein bL36 (41 aa).

Belongs to the bacterial ribosomal protein bL36 family.

This Bartonella bacilliformis (strain ATCC 35685 / KC583 / Herrer 020/F12,63) protein is Large ribosomal subunit protein bL36.